Consider the following 358-residue polypeptide: Peptide chain release factor 1 (358 aa).

N5-methylglutamine is present on Q233.

This sequence belongs to the prokaryotic/mitochondrial release factor family. Methylated by PrmC. Methylation increases the termination efficiency of RF1.

It is found in the cytoplasm. In terms of biological role, peptide chain release factor 1 directs the termination of translation in response to the peptide chain termination codons UAG and UAA. The chain is Peptide chain release factor 1 from Clostridium botulinum (strain Loch Maree / Type A3).